Here is a 112-residue protein sequence, read N- to C-terminus: MAM and fibronectin type III domain-containing protein 2 (112 aa).

Component of the acid-insoluble and acid-soluble organic matrix of the aragonitic skeleton (at protein level).

It localises to the secreted. The protein is MAM and fibronectin type III domain-containing protein 2 of Acropora millepora (Staghorn coral).